The sequence spans 396 residues: S-arrestin (396 aa).

A compositionally biased stretch (basic and acidic residues) spans 375 to 386; that stretch reads ARDPLKGELQAE. The disordered stretch occupies residues 375–396; sequence ARDPLKGELQAEEKEEEEDDEK. Positions 387-396 are enriched in acidic residues; sequence EKEEEEDDEK.

Belongs to the arrestin family. As to quaternary structure, interacts with RHO (via the phosphorylated C-terminus).

It localises to the cell projection. Its subcellular location is the cilium. The protein localises to the photoreceptor outer segment. It is found in the membrane. Binds to photoactivated, phosphorylated RHO and terminates RHO signaling via G-proteins by competing with G-proteins for the same binding site on RHO. May play a role in preventing light-dependent degeneration of retinal photoreceptor cells. The protein is S-arrestin (sag) of Xenopus laevis (African clawed frog).